The sequence spans 702 residues: MA3 DOMAIN-CONTAINING TRANSLATION REGULATORY FACTOR 1 (702 aa).

Residues 39-66 (LNIKSPTGGKGPVAGIPNRHVRRTHSGK) form a disordered region. Basic residues predominate over residues 57–66 (RHVRRTHSGK). An MI 1 domain is found at 122-243 (DYKKSVVSII…PPVFLVRSKK (122 aa)). Residues 273-280 (EKKWGGST) carry the Nuclear localization signal 1 motif. 3 consecutive MI domains span residues 286–407 (ETKK…TSDQ), 420–541 (QYKK…DIST), and 583–702 (DAKD…SATQ). A Nuclear localization signal 2 motif is present at residues 458-465 (LKRLITLA).

The protein belongs to the PDCD4 family. As to quaternary structure, binds to EIF4A1, S6K1 and S6K2. The association with ribosomes is modulated by cellular energy status and TOR activity. Post-translationally, phosphorylation by S6 kinases (e.g. S6K1 and S6K2) is modulated by cellular energy status and TOR activity. Mostly expressed in vegetative tissues, such as leaves, roots and stems, and, to a lower extent, in reproductive tissues, such as flower buds and flowers.

The protein resides in the nucleus. It localises to the cytoplasm. Its subcellular location is the cytosol. Involved in target of rapamycin (TOR)-regulated translation control, especially under energy-deficient conditions. The chain is MA3 DOMAIN-CONTAINING TRANSLATION REGULATORY FACTOR 1 from Arabidopsis thaliana (Mouse-ear cress).